The following is a 348-amino-acid chain: Protein RecA (348 aa).

64–71 (GPESSGKT) lines the ATP pocket. Basic and acidic residues predominate over residues 325 to 335 (YEIDGASKEPL). Residues 325–348 (YEIDGASKEPLEETEETLSLLDDE) form a disordered region. Positions 336 to 348 (EETEETLSLLDDE) are enriched in acidic residues.

Belongs to the RecA family.

The protein resides in the cytoplasm. Functionally, can catalyze the hydrolysis of ATP in the presence of single-stranded DNA, the ATP-dependent uptake of single-stranded DNA by duplex DNA, and the ATP-dependent hybridization of homologous single-stranded DNAs. It interacts with LexA causing its activation and leading to its autocatalytic cleavage. This is Protein RecA from Listeria seeligeri.